The chain runs to 222 residues: N-(5'-phosphoribosyl)anthranilate isomerase (222 aa).

Belongs to the TrpF family.

The catalysed reaction is N-(5-phospho-beta-D-ribosyl)anthranilate = 1-(2-carboxyphenylamino)-1-deoxy-D-ribulose 5-phosphate. It functions in the pathway amino-acid biosynthesis; L-tryptophan biosynthesis; L-tryptophan from chorismate: step 3/5. This is N-(5'-phosphoribosyl)anthranilate isomerase from Rhizobium johnstonii (strain DSM 114642 / LMG 32736 / 3841) (Rhizobium leguminosarum bv. viciae).